A 361-amino-acid polypeptide reads, in one-letter code: Probable dual-specificity RNA methyltransferase RlmN (361 aa).

Glu-91 acts as the Proton acceptor in catalysis. Positions 97–329 (QHYGLSVCVT…KKKGGNCVVR (233 aa)) constitute a Radical SAM core domain. Cys-104 and Cys-340 are oxidised to a cystine. Residues Cys-111, Cys-115, and Cys-118 each contribute to the [4Fe-4S] cluster site. Residues 163–164 (GE), Ser-195, 218–220 (SLH), and Asn-296 contribute to the S-adenosyl-L-methionine site. Catalysis depends on Cys-340, which acts as the S-methylcysteine intermediate.

Belongs to the radical SAM superfamily. RlmN family. [4Fe-4S] cluster serves as cofactor.

Its subcellular location is the cytoplasm. The catalysed reaction is adenosine(2503) in 23S rRNA + 2 reduced [2Fe-2S]-[ferredoxin] + 2 S-adenosyl-L-methionine = 2-methyladenosine(2503) in 23S rRNA + 5'-deoxyadenosine + L-methionine + 2 oxidized [2Fe-2S]-[ferredoxin] + S-adenosyl-L-homocysteine. The enzyme catalyses adenosine(37) in tRNA + 2 reduced [2Fe-2S]-[ferredoxin] + 2 S-adenosyl-L-methionine = 2-methyladenosine(37) in tRNA + 5'-deoxyadenosine + L-methionine + 2 oxidized [2Fe-2S]-[ferredoxin] + S-adenosyl-L-homocysteine. In terms of biological role, specifically methylates position 2 of adenine 2503 in 23S rRNA and position 2 of adenine 37 in tRNAs. The polypeptide is Probable dual-specificity RNA methyltransferase RlmN (Streptococcus pneumoniae serotype 2 (strain D39 / NCTC 7466)).